A 79-amino-acid chain; its full sequence is Acyl carrier protein (79 aa).

Positions 2-77 constitute a Carrier domain; sequence SEVAEKVKKI…DAIDYIEKKK (76 aa). Residue Ser37 is modified to O-(pantetheine 4'-phosphoryl)serine.

This sequence belongs to the acyl carrier protein (ACP) family. In terms of processing, 4'-phosphopantetheine is transferred from CoA to a specific serine of apo-ACP by AcpS. This modification is essential for activity because fatty acids are bound in thioester linkage to the sulfhydryl of the prosthetic group.

Its subcellular location is the cytoplasm. The protein operates within lipid metabolism; fatty acid biosynthesis. Functionally, carrier of the growing fatty acid chain in fatty acid biosynthesis. The polypeptide is Acyl carrier protein (Acidiphilium cryptum (strain JF-5)).